The chain runs to 314 residues: Carbamate kinase (314 aa).

It belongs to the carbamate kinase family.

It is found in the cytoplasm. It catalyses the reaction hydrogencarbonate + NH4(+) + ATP = carbamoyl phosphate + ADP + H2O + H(+). Its pathway is metabolic intermediate metabolism; carbamoyl phosphate degradation; CO(2) and NH(3) from carbamoyl phosphate: step 1/1. In Latilactobacillus sakei (Lactobacillus sakei), this protein is Carbamate kinase (arcC).